A 201-amino-acid chain; its full sequence is UPF0098 protein MT1961 (201 aa).

The tract at residues 125-146 (TADGETPGGGISLPNSSGQPAY) is disordered.

This sequence belongs to the UPF0098 family.

This is UPF0098 protein MT1961 from Mycobacterium tuberculosis (strain CDC 1551 / Oshkosh).